The sequence spans 308 residues: Putative integrase/recombinase y4qK (308 aa).

The region spanning 15 to 97 (LVMTPLRQRM…ALRFFFSVTL (83 aa)) is the Core-binding (CB) domain. The Tyr recombinase domain occupies 115 to 288 (KLPIILSPDE…ATNKVCATSS (174 aa)). Active-site residues include arginine 150, lysine 175, histidine 240, arginine 243, and histidine 266. Tyrosine 275 functions as the O-(3'-phospho-DNA)-tyrosine intermediate in the catalytic mechanism.

Belongs to the 'phage' integrase family.

Functionally, may function as an integrase. This is Putative integrase/recombinase y4qK from Sinorhizobium fredii (strain NBRC 101917 / NGR234).